Here is a 307-residue protein sequence, read N- to C-terminus: DDRGK domain-containing protein 1 (307 aa).

Topologically, residues 1 to 2 (MD) are lumenal. The helical transmembrane segment at 3 to 23 (LILLVGIATALLLILITLYFL) threads the bilayer. Over 24–307 (QSKNAKTETK…TPVAAGESSA (284 aa)) the chain is Cytoplasmic. The disordered stretch occupies residues 31–175 (ETKAAAQPQR…EADRLAKEER (145 aa)). Residues 52–83 (RRAQIARNQRNRLRQNQNAPAVAAAAAPAAAV) are compositionally biased toward low complexity. The span at 107–175 (LDEKMGAKKR…EADRLAKEER (69 aa)) shows a compositional bias: basic and acidic residues.

The protein belongs to the DDRGK1 family. In terms of assembly, interacts with Atg9; the interaction is transient.

It localises to the endoplasmic reticulum membrane. Functionally, substrate adapter for ufmylation, the covalent attachment of the ubiquitin-like modifier UFM1 to substrate proteins. Required for ufmylation of Atg9; protects the nervous system during aging, possibly by stabilizing Atg9 and supporting its function. The polypeptide is DDRGK domain-containing protein 1 (Drosophila virilis (Fruit fly)).